We begin with the raw amino-acid sequence, 386 residues long: Patatin-T5 (386 aa).

An N-terminal signal peptide occupies residues 1 to 23 (MATTNSFTILIFMILATTSSTFA). Positions 32–229 (LSIDGGGIKG…TVDDPALLSI (198 aa)) constitute a PNPLA domain. Residues 36-41 (GGGIKG) carry the GXGXXG motif. Asn-60 is a glycosylation site (N-linked (GlcNAc...) asparagine). The GXSXG signature appears at 75–79 (GTSTG). The active-site Nucleophile is the Ser-77. Asn-90 and Asn-202 each carry an N-linked (GlcNAc...) asparagine glycan. Asp-215 (proton acceptor) is an active-site residue. Positions 215-217 (DGA) match the DGA/G motif.

It belongs to the patatin family. Post-translationally, N-glycosylated. In terms of tissue distribution, tuber and stolon.

The protein localises to the vacuole. Functionally, probable lipolytic acyl hydrolase (LAH), an activity which is thought to be involved in the response of tubers to pathogens. In Solanum tuberosum (Potato), this protein is Patatin-T5.